The primary structure comprises 347 residues: NAD-dependent alcohol dehydrogenase (347 aa).

An N6-methyllysine modification is found at Lys11. Residues Cys38, His68, Glu98, Cys101, Cys104, Cys112, and Cys154 each contribute to the Zn(2+) site. Lys213 carries the N6-methyllysine modification.

The protein belongs to the zinc-containing alcohol dehydrogenase family. As to quaternary structure, homodimer and homotetramer. Zn(2+) is required as a cofactor.

It carries out the reaction a primary alcohol + NAD(+) = an aldehyde + NADH + H(+). The catalysed reaction is a secondary alcohol + NAD(+) = a ketone + NADH + H(+). The chain is NAD-dependent alcohol dehydrogenase (adh) from Sulfurisphaera tokodaii (strain DSM 16993 / JCM 10545 / NBRC 100140 / 7) (Sulfolobus tokodaii).